Here is a 359-residue protein sequence, read N- to C-terminus: Type-1 angiotensin II receptor (359 aa).

The Extracellular portion of the chain corresponds to 1–25 (MILNSSTEDGIKRIQDDCPKAGRHN). Asparagine 4 carries an N-linked (GlcNAc...) asparagine glycan. Angiotensin II-binding residues include glutamine 15 and aspartate 17. 2 cysteine pairs are disulfide-bonded: cysteine 18/cysteine 274 and cysteine 101/cysteine 180. A helical transmembrane segment spans residues 26–55 (YIFVMIPTLYSIIFVVGIFGNSLVVIVIYF). The Cytoplasmic portion of the chain corresponds to 56 to 61 (YMKLKT). Residues 62 to 89 (VASVFLLNLALADLCFLLTLPLWAVYTA) traverse the membrane as a helical segment. At 90 to 98 (MEYRWPFGN) the chain is on the extracellular side. The helical transmembrane segment at 99-125 (YLCKIASASVSFNLYASVFLLTCLSID) threads the bilayer. The Cytoplasmic segment spans residues 126-141 (RYVAIVHPMKSPVRRT). The chain crosses the membrane as a helical span at residues 142–165 (MLMAKVTCIIIWLLAGLASLPTII). Residues 166 to 190 (HRNVFFIENTNITVCAFHYESQNST) are Extracellular-facing. Arginine 167 is a binding site for angiotensin II. N-linked (GlcNAc...) asparagine glycosylation is present at asparagine 176. Residues phenylalanine 182, histidine 183, and tyrosine 184 each coordinate angiotensin II. The N-linked (GlcNAc...) asparagine glycan is linked to asparagine 188. Residues 191 to 216 (LPIGLGLTKNILGFLFPFLIILTSYT) form a helical membrane-spanning segment. Position 199 (lysine 199) interacts with angiotensin II. Residues 217–239 (LIWKTLKRAYEIQKNKPRNDDIF) are Cytoplasmic-facing. The chain crosses the membrane as a helical span at residues 240 to 268 (KIIMAIVLFFFFSWVPHQIFTFLDVLIQL). The Extracellular segment spans residues 269 to 278 (GIIHDCKIAD). A helical membrane pass occupies residues 279-304 (IVDTAMPITICIAYFNNCLNPLFYGF). At 305–359 (LGKKFKKYFLQLLKYIPPKAKSHSSLSTKMSTLSYRPSDHGNASTKKSASCVEVE) the chain is on the cytoplasmic side. Polar residues predominate over residues 335–352 (STLSYRPSDHGNASTKKS). Positions 335 to 359 (STLSYRPSDHGNASTKKSASCVEVE) are disordered. Cysteine 355 carries the S-palmitoyl cysteine lipid modification.

This sequence belongs to the G-protein coupled receptor 1 family. Interacts with MAS1. Interacts with ARRB1. Interacts with FLNA (via filamin repeat 21); increases PKA-mediated phosphorylation of FLNA. Post-translationally, C-terminal Ser or Thr residues may be phosphorylated. In terms of tissue distribution, adrenal, liver, aorta, kidney, lung, testis and heart.

It is found in the cell membrane. In terms of biological role, receptor for angiotensin II, a vasoconstricting peptide, which acts as a key regulator of blood pressure and sodium retention by the kidney. The activated receptor in turn couples to G-alpha proteins G(q) (GNAQ, GNA11, GNA14 or GNA15) and thus activates phospholipase C and increases the cytosolic Ca(2+) concentrations, which in turn triggers cellular responses such as stimulation of protein kinase C. This is Type-1 angiotensin II receptor (AGTR1) from Canis lupus familiaris (Dog).